Consider the following 101-residue polypeptide: Small ribosomal subunit protein uS14 (101 aa).

Residues 1–10 (MAKKSSIEKN) are compositionally biased toward basic and acidic residues. The interval 1-23 (MAKKSSIEKNNRRRRMNRNAAAK) is disordered. Residues 11-23 (NRRRRMNRNAAAK) show a composition bias toward basic residues.

The protein belongs to the universal ribosomal protein uS14 family. In terms of assembly, part of the 30S ribosomal subunit. Contacts proteins S3 and S10.

Binds 16S rRNA, required for the assembly of 30S particles and may also be responsible for determining the conformation of the 16S rRNA at the A site. The polypeptide is Small ribosomal subunit protein uS14 (Nitrobacter winogradskyi (strain ATCC 25391 / DSM 10237 / CIP 104748 / NCIMB 11846 / Nb-255)).